The sequence spans 643 residues: Phosphomethylpyrimidine synthase (643 aa).

Substrate-binding positions include Asn-248, Met-277, Tyr-306, His-342, 362 to 364, 403 to 406, and Glu-442; these read SRG and DGLR. His-446 contributes to the Zn(2+) binding site. Tyr-469 contributes to the substrate binding site. His-510 serves as a coordination point for Zn(2+). Positions 590, 593, and 598 each coordinate [4Fe-4S] cluster.

This sequence belongs to the ThiC family. As to quaternary structure, homodimer. The cofactor is [4Fe-4S] cluster.

The enzyme catalyses 5-amino-1-(5-phospho-beta-D-ribosyl)imidazole + S-adenosyl-L-methionine = 4-amino-2-methyl-5-(phosphooxymethyl)pyrimidine + CO + 5'-deoxyadenosine + formate + L-methionine + 3 H(+). Its pathway is cofactor biosynthesis; thiamine diphosphate biosynthesis. Functionally, catalyzes the synthesis of the hydroxymethylpyrimidine phosphate (HMP-P) moiety of thiamine from aminoimidazole ribotide (AIR) in a radical S-adenosyl-L-methionine (SAM)-dependent reaction. This chain is Phosphomethylpyrimidine synthase, found in Paraburkholderia xenovorans (strain LB400).